The following is a 118-amino-acid chain: Large ribosomal subunit protein uL18 (118 aa).

This sequence belongs to the universal ribosomal protein uL18 family. As to quaternary structure, part of the 50S ribosomal subunit; part of the 5S rRNA/L5/L18/L25 subcomplex. Contacts the 5S and 23S rRNAs.

Its function is as follows. This is one of the proteins that bind and probably mediate the attachment of the 5S RNA into the large ribosomal subunit, where it forms part of the central protuberance. The chain is Large ribosomal subunit protein uL18 from Helicobacter pylori (strain P12).